A 452-amino-acid polypeptide reads, in one-letter code: Pup--protein ligase (452 aa).

E9 provides a ligand contact to Mg(2+). R53 serves as a coordination point for ATP. A Mg(2+)-binding site is contributed by Y55. D57 acts as the Proton acceptor in catalysis. E63 is a Mg(2+) binding site. Residues T66 and W419 each contribute to the ATP site.

It belongs to the Pup ligase/Pup deamidase family. Pup-conjugating enzyme subfamily.

It catalyses the reaction ATP + [prokaryotic ubiquitin-like protein]-L-glutamate + [protein]-L-lysine = ADP + phosphate + N(6)-([prokaryotic ubiquitin-like protein]-gamma-L-glutamyl)-[protein]-L-lysine.. It participates in protein degradation; proteasomal Pup-dependent pathway. It functions in the pathway protein modification; protein pupylation. Catalyzes the covalent attachment of the prokaryotic ubiquitin-like protein modifier Pup to the proteasomal substrate proteins, thereby targeting them for proteasomal degradation. This tagging system is termed pupylation. The ligation reaction involves the side-chain carboxylate of the C-terminal glutamate of Pup and the side-chain amino group of a substrate lysine. The polypeptide is Pup--protein ligase (Mycolicibacterium gilvum (strain PYR-GCK) (Mycobacterium gilvum (strain PYR-GCK))).